Consider the following 302-residue polypeptide: Recombination-associated protein RdgC (302 aa).

It belongs to the RdgC family.

Its subcellular location is the cytoplasm. It localises to the nucleoid. May be involved in recombination. This chain is Recombination-associated protein RdgC, found in Xylella fastidiosa (strain M12).